The following is a 404-amino-acid chain: MKLPIYLDYSATCPVDPRVAEKMVQYMTMDGTFGNPASRSHRYGWQAEEAVDTAREQIAELLNADPREIVFTSGATESDNLAIKGAAHFYSKQGKHVITSKTEHKAVLDTCRQLEREGFEVTYLEPESNGLISLSKLEAAMRDDTVLVSIMHVNNEIGVIQDIEAIGELCRSRKIIFHVDAAQSAGKVAIDVQKLKVDLISLSAHKIYGPKGIGALYVRRKPRIRLEAQMHGGGHERGFRSGTLPTHQIVGMGEAFRIAKLDMEKDYQHALALRNRLLDGVKDMEAVTINGDLDQRVPHNLNISFAFVEGESLLMSLKDLAVSSGSACTSASLEPSYVLRALGLNDELAHSSIRFSFGRFTTEEEIDYAIEQIRVAVAKLRDMSPLWDMYKEGIDLNTVEWAHH.

Pyridoxal 5'-phosphate contacts are provided by residues 75-76 (AT), N155, Q183, and 203-205 (SAH). K206 is subject to N6-(pyridoxal phosphate)lysine. A pyridoxal 5'-phosphate-binding site is contributed by T243. C328 (cysteine persulfide intermediate) is an active-site residue. Residue C328 participates in [2Fe-2S] cluster binding.

Belongs to the class-V pyridoxal-phosphate-dependent aminotransferase family. NifS/IscS subfamily. In terms of assembly, homodimer. Forms a heterotetramer with IscU, interacts with other sulfur acceptors. Requires pyridoxal 5'-phosphate as cofactor.

The protein localises to the cytoplasm. The enzyme catalyses (sulfur carrier)-H + L-cysteine = (sulfur carrier)-SH + L-alanine. Its pathway is cofactor biosynthesis; iron-sulfur cluster biosynthesis. Its function is as follows. Master enzyme that delivers sulfur to a number of partners involved in Fe-S cluster assembly, tRNA modification or cofactor biosynthesis. Catalyzes the removal of elemental sulfur atoms from cysteine to produce alanine. Functions as a sulfur delivery protein for Fe-S cluster synthesis onto IscU, an Fe-S scaffold assembly protein, as well as other S acceptor proteins. This is Cysteine desulfurase IscS from Vibrio vulnificus (strain YJ016).